The sequence spans 188 residues: MKHKVGILGGTFDPPHLAHLRMAEEAKKQLGLEKILFLPNKIPPHKHISGMASSDERVEMLQLMIEGIDSFEIDTRELMRTGKSYTYDTMRDMISEQPDTDFYFIIGGDMVEYLPKWYHIDDLVKMVTFVGVNRPSYQTEVPYDIVKINMPETTISSTEIRNNIENASTFLPEKVWSYIKEHQLYGKK.

The protein belongs to the NadD family.

The enzyme catalyses nicotinate beta-D-ribonucleotide + ATP + H(+) = deamido-NAD(+) + diphosphate. It participates in cofactor biosynthesis; NAD(+) biosynthesis; deamido-NAD(+) from nicotinate D-ribonucleotide: step 1/1. Catalyzes the reversible adenylation of nicotinate mononucleotide (NaMN) to nicotinic acid adenine dinucleotide (NaAD). In Listeria monocytogenes serotype 4a (strain HCC23), this protein is Probable nicotinate-nucleotide adenylyltransferase.